The sequence spans 273 residues: 2,3,4,5-tetrahydropyridine-2,6-dicarboxylate N-succinyltransferase (273 aa).

Substrate-binding residues include Arg-104 and Asp-141.

It belongs to the transferase hexapeptide repeat family. In terms of assembly, homotrimer.

It localises to the cytoplasm. The enzyme catalyses (S)-2,3,4,5-tetrahydrodipicolinate + succinyl-CoA + H2O = (S)-2-succinylamino-6-oxoheptanedioate + CoA. It participates in amino-acid biosynthesis; L-lysine biosynthesis via DAP pathway; LL-2,6-diaminopimelate from (S)-tetrahydrodipicolinate (succinylase route): step 1/3. The polypeptide is 2,3,4,5-tetrahydropyridine-2,6-dicarboxylate N-succinyltransferase (Psychrobacter arcticus (strain DSM 17307 / VKM B-2377 / 273-4)).